A 221-amino-acid chain; its full sequence is Ribosomal RNA small subunit methyltransferase G (221 aa).

Residues G85, F90, 136 to 137 (AE), and R149 each bind S-adenosyl-L-methionine.

This sequence belongs to the methyltransferase superfamily. RNA methyltransferase RsmG family.

It localises to the cytoplasm. Functionally, specifically methylates the N7 position of a guanine in 16S rRNA. This Porphyromonas gingivalis (strain ATCC BAA-308 / W83) protein is Ribosomal RNA small subunit methyltransferase G.